The sequence spans 338 residues: Calcium uniporter protein 4, mitochondrial (338 aa).

Residues 1–36 (MVMMKKLLSNRLFNMSKTASQSLMNCRTSSSSSLAM) constitute a mitochondrion transit peptide. The chain crosses the membrane as a helical span at residues 233–253 (LWAGLGYLIIQTAGFMRLTFW). The Selectivity filter signature appears at 257–265 (WDVMEPICF). Glu261 contacts Ca(2+). Residues 263–280 (ICFYVSSVYFMAGYTFFL) traverse the membrane as a helical segment.

This sequence belongs to the MCU (TC 1.A.77) family.

It is found in the mitochondrion inner membrane. The enzyme catalyses Ca(2+)(in) = Ca(2+)(out). Mitochondrial inner membrane calcium uniporter that mediates calcium uptake into mitochondria. Constitutes a pore-forming and calcium-conducting subunit. Mitochondrial calcium homeostasis plays key roles in cellular physiology and regulates cell bioenergetics, cytoplasmic calcium signals and activation of cell death pathways. This is Calcium uniporter protein 4, mitochondrial from Arabidopsis thaliana (Mouse-ear cress).